The following is a 32-amino-acid chain: Calichemicin antitumor antibiotic biosynthesis protein (32 aa).

The chain is Calichemicin antitumor antibiotic biosynthesis protein from Micromonospora echinospora (Micromonospora purpurea).